The chain runs to 368 residues: 4-hydroxy-3-methylbut-2-en-1-yl diphosphate synthase (flavodoxin) (368 aa).

Residues Cys271, Cys274, Cys306, and Glu313 each coordinate [4Fe-4S] cluster.

This sequence belongs to the IspG family. [4Fe-4S] cluster is required as a cofactor.

The catalysed reaction is (2E)-4-hydroxy-3-methylbut-2-enyl diphosphate + oxidized [flavodoxin] + H2O + 2 H(+) = 2-C-methyl-D-erythritol 2,4-cyclic diphosphate + reduced [flavodoxin]. Its pathway is isoprenoid biosynthesis; isopentenyl diphosphate biosynthesis via DXP pathway; isopentenyl diphosphate from 1-deoxy-D-xylulose 5-phosphate: step 5/6. Converts 2C-methyl-D-erythritol 2,4-cyclodiphosphate (ME-2,4cPP) into 1-hydroxy-2-methyl-2-(E)-butenyl 4-diphosphate. This Histophilus somni (strain 129Pt) (Haemophilus somnus) protein is 4-hydroxy-3-methylbut-2-en-1-yl diphosphate synthase (flavodoxin).